Here is a 216-residue protein sequence, read N- to C-terminus: Cytidylate kinase (216 aa).

7–15 contributes to the ATP binding site; sequence GPAGTGKST.

Belongs to the cytidylate kinase family. Type 1 subfamily.

The protein resides in the cytoplasm. It catalyses the reaction CMP + ATP = CDP + ADP. The enzyme catalyses dCMP + ATP = dCDP + ADP. In Chlamydia muridarum (strain MoPn / Nigg), this protein is Cytidylate kinase.